Reading from the N-terminus, the 595-residue chain is Indole-3-acetic acid-amido synthetase GH3.15 (595 aa).

ATP is bound by residues 97–98 (SS), threonine 302, and 325–330 (FYGSSE). Substrate-binding residues include phenylalanine 325 and phenylalanine 332. ATP-binding residues include tyrosine 348 and aspartate 408.

It belongs to the IAA-amido conjugating enzyme family. As to expression, expressed in seedlings, roots, and parts of the siliques.

The enzyme catalyses (indol-3-yl)butanoate + L-cysteine + ATP = (indol-3-yl)butanoyl-L-cysteine + AMP + diphosphate + H(+). The catalysed reaction is (indol-3-yl)butanoate + L-glutamine + ATP = (indol-3-yl)butanoyl-L-glutamine + AMP + diphosphate + H(+). It carries out the reaction 4-(2,4-dichlorophenoxy)butanoate + L-glutamine + ATP = 4-(2,4-dichlorophenoxy)butanoyl-L-glutamine + AMP + diphosphate + H(+). In terms of biological role, indole-3-acetic acid-amido (IAA) synthetase that catalyzes the conjugation of amino acids to auxin specifically using the auxin precursor indole-3-butyric acid (IBA) and glutamine and, possibly, cysteine as substrates. Displays high catalytic activity with the auxinic phenoxyalkanoic acid herbicides 4-(2,4-dichlorophenoxy)butyric acid (2,4-DB) and to some extent 2,4-dichlorophenoxylacetic acid (2,4-D) as substrates, thus conferring resistance to herbicides. The chain is Indole-3-acetic acid-amido synthetase GH3.15 from Arabidopsis thaliana (Mouse-ear cress).